We begin with the raw amino-acid sequence, 344 residues long: Anamorsin homolog 1 (344 aa).

Residues 1-169 are N-terminal SAM-like domain; the sequence is MANNVGVLLA…DTGSVFQIRK (169 aa). The interval 170–233 is linker; that stretch reads KVSNQNGNFR…EDDLLTEEDL (64 aa). Residues C244, C251, C254, and C256 each coordinate [2Fe-2S] cluster. The tract at residues 244 to 256 is fe-S binding site A; the sequence is CAPTKKACKNCTC. 4 residues coordinate [4Fe-4S] cluster: C282, C285, C293, and C296. 2 short sequence motifs (cx2C motif) span residues 282–285 and 293–296; these read CGSC and CAGC. Residues 282-296 form a fe-S binding site B region; sequence CGSCGLGDAFRCAGC.

Belongs to the anamorsin family. Monomer. The cofactor is [2Fe-2S] cluster. [4Fe-4S] cluster serves as cofactor.

It is found in the cytoplasm. The protein resides in the mitochondrion intermembrane space. Functionally, component of the cytosolic iron-sulfur (Fe-S) protein assembly (CIA) machinery. Required for the maturation of extramitochondrial Fe-S proteins. Part of an electron transfer chain functioning in an early step of cytosolic Fe-S biogenesis, facilitating the de novo assembly of a [4Fe-4S] cluster on the cytosolic Fe-S scaffold complex. Electrons are transferred from NADPH via a FAD- and FMN-containing diflavin oxidoreductase. Together with the diflavin oxidoreductase, also required for the assembly of the diferric tyrosyl radical cofactor of ribonucleotide reductase (RNR), probably by providing electrons for reduction during radical cofactor maturation in the catalytic small subunit. The polypeptide is Anamorsin homolog 1 (Physcomitrium patens (Spreading-leaved earth moss)).